We begin with the raw amino-acid sequence, 76 residues long: UPF0291 protein BC_1827 (76 aa).

The protein belongs to the UPF0291 family.

It localises to the cytoplasm. The sequence is that of UPF0291 protein BC_1827 from Bacillus cereus (strain ATCC 14579 / DSM 31 / CCUG 7414 / JCM 2152 / NBRC 15305 / NCIMB 9373 / NCTC 2599 / NRRL B-3711).